Reading from the N-terminus, the 244-residue chain is Gas vesicle protein F (244 aa).

This sequence belongs to the gas vesicle GvpF/GvpL family. Binds GvpA.

It is found in the gas vesicle. A minor component of the gas vesicle, may be involved in preventing GvpA aggregation during gas vesicle nucleation. Gas vesicles (GV) are hollow, gas filled proteinaceous nanostructures. During planktonic growth they allow positioning of the organism at a favorable depth for light or nutrient acquisition. Functionally, cluster expression in E.coli (gvpA1-gvpA2-gvpC-gvpN-gvpJ-gvpK-gvpF-gvpG-gvpV-gvpW) allows cells to float and produces irregularly shaped gas vesicles. The protein is Gas vesicle protein F of Nostoc sp. (strain PCC 7120 / SAG 25.82 / UTEX 2576).